The chain runs to 137 residues: Large ribosomal subunit protein uL16c (137 aa).

Positions 1–21 (MLSPKKTKYRKQHRGRMKGKA) are disordered.

Belongs to the universal ribosomal protein uL16 family. Part of the 50S ribosomal subunit.

It localises to the plastid. It is found in the chloroplast. The polypeptide is Large ribosomal subunit protein uL16c (Oedogonium cardiacum (Filamentous green alga)).